Consider the following 567-residue polypeptide: Phosphoglucomutase-like protein 5 (567 aa).

The tract at residues 1 to 26 (MEGSPIPVLTVPTAPYEDQRPAGGGG) is disordered. Phosphothreonine is present on T120. The residue at position 122 (S122) is a Phosphoserine.

Belongs to the phosphohexose mutase family. As to quaternary structure, interacts with DMD/dystrophin; the interaction is direct. Interacts with UTRN/utrophin. Detected in smooth and cardiac muscle at high levels and in skeletal muscle at low level. Present in other tissues due to vascular or other smooth muscle component. Low levels are present in liver, kidney, skin and brain (at protein level).

It localises to the cell junction. The protein resides in the adherens junction. It is found in the cytoplasm. Its subcellular location is the cytoskeleton. The protein localises to the cell membrane. It localises to the sarcolemma. Its function is as follows. Component of adherens-type cell-cell and cell-matrix junctions. Has no phosphoglucomutase activity in vitro. In Homo sapiens (Human), this protein is Phosphoglucomutase-like protein 5.